Here is an 89-residue protein sequence, read N- to C-terminus: Small ribosomal subunit protein uS15 (89 aa).

It belongs to the universal ribosomal protein uS15 family. In terms of assembly, part of the 30S ribosomal subunit. Forms a bridge to the 50S subunit in the 70S ribosome, contacting the 23S rRNA.

In terms of biological role, one of the primary rRNA binding proteins, it binds directly to 16S rRNA where it helps nucleate assembly of the platform of the 30S subunit by binding and bridging several RNA helices of the 16S rRNA. Its function is as follows. Forms an intersubunit bridge (bridge B4) with the 23S rRNA of the 50S subunit in the ribosome. In Elusimicrobium minutum (strain Pei191), this protein is Small ribosomal subunit protein uS15.